The chain runs to 508 residues: Cytochrome P450 monooxygenase aflV (508 aa).

The chain crosses the membrane as a helical span at residues 18–38 (LTWWFLAVGGAWIVSKIIKIL). Asparagine 192, asparagine 209, asparagine 302, and asparagine 408 each carry an N-linked (GlcNAc...) asparagine glycan. Cysteine 453 contributes to the heme binding site.

It belongs to the cytochrome P450 family. Heme serves as cofactor.

It is found in the membrane. It participates in mycotoxin biosynthesis; aflatoxin biosynthesis. Cytochrome P450 monooxygenase; part of the gene cluster that mediates the biosynthesis of aflatoxins, a group of polyketide-derived furanocoumarins, and part of the most toxic and carcinogenic compounds among the known mycotoxins. The four major aflatoxins produced by A.parasiticus are aflatoxin B1 (AFB1), aflatoxin B2 (AFB2), aflatoxin G1 (AFG1) and aflatoxin G2 (AFG2). The role of the cytochrome P450 monooxygenase aflV in aflatoxin biosynthesis has still to be characterized. The biosynthesis of aflatoxins begins with the norsolorinic acid synthase aflC that combines a hexanoyl starter unit produced by the fatty acid synthase aflA/aflB and 7 malonyl-CoA extender units to synthesize the precursor NOR. The second step is the conversion of NOR to averantin and requires the norsolorinic acid ketoreductase aflD, which catalyzes the dehydration of norsolorinic acid to form (1'S)-averantin. The norsolorinic acid reductases aflE and aflF may also play a role in the conversion of NOR to AVN. The cytochrome P450 monooxygenase aflG then catalyzes the hydroxylation of AVN to 5'hydroxyaverantin (HAVN). The next step is performed by the 5'-hydroxyaverantin dehydrogenase aflH that transforms HAVN to 5'-oxoaverantin (OAVN) which is further converted to averufin (AVF) by aflK that plays a dual role in the pathway, as a 5'-oxoaverantin cyclase that mediates conversion of 5'-oxoaverantin, as well as a versicolorin B synthase in a later step in the pathway. The averufin oxidase aflI catalyzes the conversion of AVF to versiconal hemiacetal acetate (VHA). VHA is then the substrate for the versiconal hemiacetal acetate esterase aflJ to yield versiconal (VAL). Versicolorin B synthase aflK then converts VAL to versicolorin B (VERB) by closing the bisfuran ring of aflatoxin which is required for DNA-binding, thus giving to aflatoxin its activity as a mutagen. Then, the activity of the versicolorin B desaturase aflL leads to versicolorin A (VERA). A branch point starts from VERB since it can also be converted to dihydrodemethylsterigmatocystin (DMDHST), probably also by aflL, VERA being a precursor for aflatoxins B1 and G1, and DMDHST for aflatoxins B2 and G2. Next, the versicolorin reductase aflM and the cytochrome P450 monooxygenase aflN are involved in conversion of VERA to demethylsterigmatocystin (DMST). AflX and aflY seem also involved in this step, through probable aflX-mediated epoxide ring-opening step following versicolorin A oxidation and aflY-mediated Baeyer-Villiger oxidation required for the formation of the xanthone ring. The methyltransferase aflO then leads to the modification of DMST to sterigmatocystin (ST), and of DMDHST to dihydrosterigmatocystin (DHST). Both ST and DHST are then substrates of the O-methyltransferase aflP to yield O-methylsterigmatocystin (OMST) and dihydro-O-methylsterigmatocystin (DHOMST), respectively. Finally OMST is converted to aflatoxins B1 and G1, and DHOMST to aflatoxins B2 and G2, via the action of several enzymes including O-methylsterigmatocystin oxidoreductase aflQ, the cytochrome P450 monooxygenase aflU, but also the NADH-dependent flavin oxidoreductase nadA which is specifically required for the synthesis of AFG1. In Aspergillus parasiticus (strain ATCC 56775 / NRRL 5862 / SRRC 143 / SU-1), this protein is Cytochrome P450 monooxygenase aflV.